Consider the following 238-residue polypeptide: Group 3 late-embryogenesis abundant protein, mitochondrial (238 aa).

A disordered region spans residues 41–62 (SSGSGRPADNWAESQKEKAKAG). The stretch at 50–202 (NWAESQKEKA…AGDLKDKAQQ (153 aa)) forms a coiled coil. 6 LEA 11-mer repeat repeats span residues 64–74 (KDAQAEVGKVA), 89–99 (KDAVKQGANDL), 140–150 (KEAAENAWEKT), 151–161 (KDVAENLKDKV), 179–189 (KDRAQDAASEV), and 190–200 (KHKAGDLKDKA). 2 stretches are compositionally biased toward basic and acidic residues: residues 182 to 200 (AQDA…KDKA) and 213 to 225 (DNRK…RRDS). A disordered region spans residues 182 to 238 (AQDAASEVKHKAGDLKDKAQQVIHDATTQSGDNRKQDQQQRRDSQGSQSGQNSRSRN). Over residues 226–238 (QGSQSGQNSRSRN) the composition is skewed to low complexity.

This sequence belongs to the LEA type 4 family.

It localises to the mitochondrion. Mitochondrial heat soluble protein acting as a molecular shield in water-deficient condition. The protein is Group 3 late-embryogenesis abundant protein, mitochondrial of Hypsibius exemplaris (Freshwater tardigrade).